Reading from the N-terminus, the 530-residue chain is G2/mitotic-specific cyclin-B (530 aa).

Residues 76–152 (ARVDSHWKKQ…EPTLKREDSN (77 aa)) form a disordered region. Low complexity predominate over residues 121–144 (PTKTTVEPTKVTVKSSSSENVNEP). The residue at position 137 (Ser-137) is a Phosphoserine.

Belongs to the cyclin family. Cyclin AB subfamily. Interacts with the protein kinase Cdk1 to form a serine/threonine kinase holoenzyme complex also known as maturation promoting factor (MPF). The cyclin subunit imparts substrate specificity to the complex.

In terms of biological role, essential for the control of the cell cycle at the G2/M (mitosis) transition. The protein is G2/mitotic-specific cyclin-B (CycB) of Drosophila melanogaster (Fruit fly).